The sequence spans 98 residues: Feather beta keratin (98 aa).

At Ser-2 the chain carries N-acetylserine.

It belongs to the avian keratin family. The avian keratins (F-ker, S-ker, C-ker and B-ker) are a complex mixture of very similar polypeptides.

The chain is Feather beta keratin from Cathartes aura (Turkey vulture).